The primary structure comprises 268 residues: Regulation of nuclear pre-mRNA domain-containing protein 1A (268 aa).

Positions Met1–Arg133 constitute a CID domain.

This sequence belongs to the UPF0400 (RTT103) family. In terms of assembly, may form a heterodimer with RPRD1B. Associates with the RNA polymerase II subunit POLR2A (via CTD phosphorylated at 'Ser-2' and 'Ser-7' of the heptad repeats).

It localises to the nucleus. Interacts with phosphorylated C-terminal heptapeptide repeat domain (CTD) of the largest RNA polymerase II subunit POLR2A, and participates in dephosphorylation of the CTD by RPAP2. May act as a negative regulator of cyclin-D1 (CCND1) and cyclin-E (CCNE1) in the cell cycle. This chain is Regulation of nuclear pre-mRNA domain-containing protein 1A (RPRD1A), found in Gallus gallus (Chicken).